The primary structure comprises 84 residues: Serine protease inhibitor Kazal-type 2 (84 aa).

The N-terminal stretch at 1–23 is a signal peptide; sequence MALSVLRLALLLLAVTFAASLIP. The residue at position 24 (Q24) is a Pyrrolidone carboxylic acid. Residues 30-84 form the Kazal-like domain; the sequence is KYRTPNCSQYRLPGCPRHFNPVCGSDMSTYANECTLCMKIREGGHNIKIIRNGPC. Intrachain disulfides connect C36/C66, C44/C63, and C52/C84.

In terms of tissue distribution, expressed in epididymis (at protein level).

It is found in the secreted. The protein localises to the cytoplasmic vesicle. The protein resides in the secretory vesicle. It localises to the acrosome. Functionally, as a strong inhibitor of acrosin, it is required for normal spermiogenesis. It probably hinders premature activation of proacrosin and other proteases, thus preventing the cascade of events leading to spermiogenesis defects. May be involved in the regulation of serine protease-dependent germ cell apoptosis. It also inhibits trypsin. The polypeptide is Serine protease inhibitor Kazal-type 2 (SPINK2) (Homo sapiens (Human)).